We begin with the raw amino-acid sequence, 451 residues long: Phosphoglucosamine mutase (451 aa).

The Phosphoserine intermediate role is filled by serine 102. The Mg(2+) site is built by serine 102, aspartate 243, aspartate 245, and aspartate 247. Serine 102 is subject to Phosphoserine.

The protein belongs to the phosphohexose mutase family. It depends on Mg(2+) as a cofactor. In terms of processing, activated by phosphorylation.

The enzyme catalyses alpha-D-glucosamine 1-phosphate = D-glucosamine 6-phosphate. Functionally, catalyzes the conversion of glucosamine-6-phosphate to glucosamine-1-phosphate. In Salinispora tropica (strain ATCC BAA-916 / DSM 44818 / JCM 13857 / NBRC 105044 / CNB-440), this protein is Phosphoglucosamine mutase.